The primary structure comprises 91 residues: Small membrane A-kinase anchor protein (91 aa).

Gly2 is lipidated: N-myristoyl glycine.

The protein belongs to the small membrane AKAP family. May be palmitoylated at Cys-3.

The protein resides in the cell membrane. Functionally, binds to type I regulatory subunits of protein kinase A and may anchor/target them to the plasma membrane. This Xenopus tropicalis (Western clawed frog) protein is Small membrane A-kinase anchor protein.